A 575-amino-acid polypeptide reads, in one-letter code: Transcription factor coe2 (575 aa).

Residues 63 to 66 (RKSN) form an interaction with DNA region. The C5-type zinc finger occupies 151 to 170 (CRVLLTHEVMCSRCCEKKSC). Interaction with DNA regions lie at residues 197 to 204 (NCLKTAGN) and 236 to 239 (NNSK). One can recognise an IPT/TIG domain in the interval 254 to 336 (PCIKAISPSE…CKGAPGRFIY (83 aa)). Positions 450–487 (IRNTSSISPRGYSSSSTPQQSNYSTPSNSMNGYSNVPM) are disordered. The span at 454–476 (SSISPRGYSSSSTPQQSNYSTPS) shows a compositional bias: low complexity. Residues 477–487 (NSMNGYSNVPM) show a composition bias toward polar residues.

This sequence belongs to the COE family.

It is found in the nucleus. Functionally, may play a pivotal role in the transcriptional cascade that specifies primary neurons in embryos. Stabilizes the higher neural potential of selected progenitor cells that express neurog2/X-ngnr-1 by maintaining Delta-Notch signaling. Thus ensures the transition between neural competence and irreversible commitment to a neural fate. Also promotes neuronal differentiation by activating neurod1 expression, directly or indirectly. The sequence is that of Transcription factor coe2 from Xenopus tropicalis (Western clawed frog).